The primary structure comprises 340 residues: Tetraacyldisaccharide 4'-kinase (340 aa).

50–57 (HGGGAGKT) contributes to the ATP binding site.

Belongs to the LpxK family.

The enzyme catalyses a lipid A disaccharide + ATP = a lipid IVA + ADP + H(+). It participates in glycolipid biosynthesis; lipid IV(A) biosynthesis; lipid IV(A) from (3R)-3-hydroxytetradecanoyl-[acyl-carrier-protein] and UDP-N-acetyl-alpha-D-glucosamine: step 6/6. In terms of biological role, transfers the gamma-phosphate of ATP to the 4'-position of a tetraacyldisaccharide 1-phosphate intermediate (termed DS-1-P) to form tetraacyldisaccharide 1,4'-bis-phosphate (lipid IVA). This is Tetraacyldisaccharide 4'-kinase from Rhodopseudomonas palustris (strain BisA53).